A 301-amino-acid chain; its full sequence is MEFVLLGFSDIPNLHWMLFSIFLLMYLMILMCNGIIILLIKIHPALQTPMYFFLSNFSLLEICYVTIIIPRMLMDIWTQKGNISLFACATQMCFFLMLGGTECLLLTVMAYDRYVAICKPLQYPLVMNHKVCIQLIIASWTITIPVVIGETCQIFLLPFCGTNTINHFFCDIPPILKLACGNIFVNEITVHVVAVVFITVPFLLIVVSYGKIISNILKLSSARGKAKAFSTCSSHLIVVILFFGAGTITYLQPKPHQFQRMGKLISLFYTILIPTLNPIIYTLRNKDIMVALRKLLAKLLT.

At 1-16 (MEFVLLGFSDIPNLHW) the chain is on the extracellular side. Residues 17 to 37 (MLFSIFLLMYLMILMCNGIII) traverse the membrane as a helical segment. Residues 38 to 45 (LLIKIHPA) are Cytoplasmic-facing. The helical transmembrane segment at 46-66 (LQTPMYFFLSNFSLLEICYVT) threads the bilayer. Topologically, residues 67–90 (IIIPRMLMDIWTQKGNISLFACAT) are extracellular. Residue N82 is glycosylated (N-linked (GlcNAc...) asparagine). C88 and C180 form a disulfide bridge. Residues 91–111 (QMCFFLMLGGTECLLLTVMAY) form a helical membrane-spanning segment. Residues 112-130 (DRYVAICKPLQYPLVMNHK) lie on the Cytoplasmic side of the membrane. Residues 131-151 (VCIQLIIASWTITIPVVIGET) traverse the membrane as a helical segment. Over 152–188 (CQIFLLPFCGTNTINHFFCDIPPILKLACGNIFVNEI) the chain is Extracellular. A helical membrane pass occupies residues 189–208 (TVHVVAVVFITVPFLLIVVS). Over 209 to 228 (YGKIISNILKLSSARGKAKA) the chain is Cytoplasmic. A helical membrane pass occupies residues 229-249 (FSTCSSHLIVVILFFGAGTIT). Over 250–262 (YLQPKPHQFQRMG) the chain is Extracellular. A helical transmembrane segment spans residues 263–283 (KLISLFYTILIPTLNPIIYTL). Topologically, residues 284 to 301 (RNKDIMVALRKLLAKLLT) are cytoplasmic.

Belongs to the G-protein coupled receptor 1 family.

Its subcellular location is the cell membrane. Functionally, odorant receptor. The chain is Olfactory receptor 10AG1 (OR10AG1) from Homo sapiens (Human).